We begin with the raw amino-acid sequence, 589 residues long: Protein sprouty (589 aa).

Disordered stretches follow at residues 1 to 37 (MDRRNGGDPLAPPRPPKLLPRVHRPRAPEPTLSGVDH), 102 to 194 (RPSS…RPES), and 239 to 320 (LHLQ…MGLG). Low complexity-rich tracts occupy residues 104 to 135 (SSLSRNSSTASSTTATGISVSGSGSVSGSSSS) and 148 to 162 (NNSISNNNNNSINNN). The span at 163–172 (FLSHFQSAEP) shows a compositional bias: polar residues. Residues 239–272 (LHLQQHQQHLQQQQQQQQQQQQQQHLQHQQNQQH) show a composition bias toward low complexity. Positions 276-286 (ATTTQATSVGS) are enriched in polar residues. The region spanning 380-499 (RCGRCRCEQC…CYGRFAGRGC (120 aa)) is the SPR domain.

It belongs to the sprouty family. As to quaternary structure, interacts with DRK and RasGAP1 proteins of the Ras pathway. In terms of tissue distribution, in ovary, expressed from stage 7 of oogenesis in the posterior follicle cells and during stage 9 when the follicle cells migrate posteriorly over the oocyte nucleus, expression is seen in the dorsal and lateral cells and is excluded from the ventral cells. Once the migration of follicle cells is complete expressed in the dorsal-anterior corner of the egg chamber. Expressed in the embryonic tracheal system, developing eye imaginal disk, embryonic chordotonal organ precursors, midline glia and wing imaginal disk.

It is found in the cell membrane. Functionally, inhibitor of tracheal branching that restricts branch budding by antagonizing the BNL-FGF pathway (BNL: branchless, an fgf inducer of branching). Acts as an antagonist of EGFR-mediated signaling in the eye (where it is important for cell determination) midline glia, chordotonal organs, wing and ovarian follicle cells. The polypeptide is Protein sprouty (sty) (Drosophila melanogaster (Fruit fly)).